The chain runs to 968 residues: RNA polymerase-associated protein RapA (968 aa).

Positions glutamate 164 to asparagine 334 constitute a Helicase ATP-binding domain. An ATP-binding site is contributed by aspartate 177–threonine 184. The DEAH box motif lies at aspartate 280–histidine 283. The Helicase C-terminal domain maps to arginine 490–aspartate 664.

Belongs to the SNF2/RAD54 helicase family. RapA subfamily. Interacts with the RNAP. Has a higher affinity for the core RNAP than for the holoenzyme. Its ATPase activity is stimulated by binding to RNAP.

Its function is as follows. Transcription regulator that activates transcription by stimulating RNA polymerase (RNAP) recycling in case of stress conditions such as supercoiled DNA or high salt concentrations. Probably acts by releasing the RNAP, when it is trapped or immobilized on tightly supercoiled DNA. Does not activate transcription on linear DNA. Probably not involved in DNA repair. The chain is RNA polymerase-associated protein RapA from Serratia proteamaculans (strain 568).